The sequence spans 546 residues: Probable protein kinase UbiB (546 aa).

The Protein kinase domain maps to 124 to 502; it reads DFDIQPLASA…HVRQSQSRYL (379 aa). Residues 130-138 and Lys-153 contribute to the ATP site; that span reads LASASIAQV. Asp-288 (proton acceptor) is an active-site residue. A run of 2 helical transmembrane segments spans residues 501–521 and 522–542; these read YLLG…VNRP and EWGL…LVGW.

It belongs to the ABC1 family. UbiB subfamily.

The protein localises to the cell inner membrane. It participates in cofactor biosynthesis; ubiquinone biosynthesis [regulation]. Is probably a protein kinase regulator of UbiI activity which is involved in aerobic coenzyme Q (ubiquinone) biosynthesis. In Salmonella agona (strain SL483), this protein is Probable protein kinase UbiB.